Consider the following 266-residue polypeptide: Agamous-like MADS-box protein AGL97 (266 aa).

The MADS-box domain occupies G3–F63. Residues W88–L130 adopt a coiled-coil conformation.

As to quaternary structure, interacts with AGL27 and AGL62.

It is found in the nucleus. Putative transcription factor. The sequence is that of Agamous-like MADS-box protein AGL97 (AGL97) from Arabidopsis thaliana (Mouse-ear cress).